We begin with the raw amino-acid sequence, 599 residues long: Aspartate--tRNA(Asp/Asn) ligase (599 aa).

Glu172 contacts L-aspartate. Positions 196–199 are aspartate; sequence QLFK. Residue Arg218 coordinates L-aspartate. ATP-binding positions include 218-220 and Gln227; that span reads RDE. Position 454 (His454) interacts with L-aspartate. ATP is bound at residue Glu488. An L-aspartate-binding site is contributed by Arg495. 540 to 543 serves as a coordination point for ATP; sequence GLDR.

Belongs to the class-II aminoacyl-tRNA synthetase family. Type 1 subfamily. As to quaternary structure, homodimer.

It localises to the cytoplasm. It carries out the reaction tRNA(Asx) + L-aspartate + ATP = L-aspartyl-tRNA(Asx) + AMP + diphosphate. Aspartyl-tRNA synthetase with relaxed tRNA specificity since it is able to aspartylate not only its cognate tRNA(Asp) but also tRNA(Asn). Reaction proceeds in two steps: L-aspartate is first activated by ATP to form Asp-AMP and then transferred to the acceptor end of tRNA(Asp/Asn). The chain is Aspartate--tRNA(Asp/Asn) ligase from Methylibium petroleiphilum (strain ATCC BAA-1232 / LMG 22953 / PM1).